The following is a 123-amino-acid chain: Protein Wnt-7a (123 aa).

A lipid anchor (O-palmitoleoyl serine; by PORCN) is attached at serine 1. The tract at residues 33–61 (VEPVRASRNKRPTFLKIKKPLSYRKPMDT) is disordered linker. A disulfide bridge connects residues cysteine 89 and cysteine 104. N-linked (GlcNAc...) asparagine glycosylation is present at asparagine 90.

The protein belongs to the Wnt family. Forms a soluble 1:1 complex with AFM; this prevents oligomerization and is required for prolonged biological activity. The complex with AFM may represent the physiological form in body fluids. Interacts with FZD5. Interacts with PORCN. Post-translationally, palmitoleoylation is required for efficient binding to frizzled receptors. Depalmitoleoylation leads to Wnt signaling pathway inhibition.

It is found in the secreted. It localises to the extracellular space. The protein localises to the extracellular matrix. Ligand for members of the frizzled family of seven transmembrane receptors that functions in the canonical Wnt/beta-catenin signaling pathway. Plays an important role in embryonic development, including dorsal versus ventral patterning during limb development, skeleton development and urogenital tract development. Required for central nervous system (CNS) angiogenesis and blood-brain barrier regulation. The sequence is that of Protein Wnt-7a (WNT7A) from Meleagris gallopavo (Wild turkey).